Consider the following 1380-residue polypeptide: Respiration factor 2 (1380 aa).

C2H2-type zinc fingers lie at residues 151-173 (FLCP…QHSH) and 179-202 (YLCI…QKLH). The interval 208-231 (TGDPRRMTPAPNSTSSFASKRRHS) is disordered. Phosphoserine is present on residues Ser-231 and Ser-322. Disordered regions lie at residues 413-445 (NLNL…NSNN), 544-584 (SPKN…NIDP), 624-643 (SRSS…SLNH), and 652-688 (LNLS…KRRR). Over residues 424–445 (QQQQQQQQQQNSTSSTIVNSNN) the composition is skewed to low complexity. Residue Ser-544 is modified to Phosphoserine. Polar residues predominate over residues 544-569 (SPKNPPTTVSDSSSTINFNPGTNNLL). The span at 575-584 (PNDKDSNIDP) shows a compositional bias: basic and acidic residues. Over residues 624–634 (SRSSIPNKSPP) the composition is skewed to low complexity. Residue Ser-632 is modified to Phosphoserine. The span at 652-681 (LNLSLNGSTDLPSTPQNQLKEPSYSDPISH) shows a compositional bias: polar residues.

This sequence belongs to the RSF2/TDA9 family.

It localises to the nucleus. Functionally, transcription factor that regulates expression of both nuclear and mitochondrial genes, and more specifically those required for glycerol-based growth and respiration. This Saccharomyces cerevisiae (strain ATCC 204508 / S288c) (Baker's yeast) protein is Respiration factor 2 (RSF2).